Reading from the N-terminus, the 242-residue chain is Myogenic factor 6 (242 aa).

Residues 30–63 are disordered; the sequence is GSPLYPGSDGTLSPCQDQLPPEAGSDSSGEEHVL. The bHLH domain occupies 93 to 144; sequence DRRKAATLRERRRLKKINEAFEALKRRTVANPNQRLPKVEILRSAISYIERL. Residues 190-210 are disordered; the sequence is ASDHSRALGGSPKAGGSMVES.

Efficient DNA binding requires dimerization with another bHLH protein. As to expression, skeletal muscle.

It is found in the nucleus. Involved in muscle differentiation (myogenic factor). Induces fibroblasts to differentiate into myoblasts. Probable sequence specific DNA-binding protein. In Gallus gallus (Chicken), this protein is Myogenic factor 6 (MYF6).